Consider the following 601-residue polypeptide: Deoxyhypusine synthase (601 aa).

Residues 109-113 and 184-186 each bind NAD(+); these read ANLMG and SGG. 189–190 contributes to the spermidine binding site; sequence EH. Positions 210–242 are disordered; that stretch reads GHVSSTVSSEATAPPKGLQQRAEKPLGTRAAAG. A compositionally biased stretch (polar residues) spans 211 to 220; the sequence is HVSSTVSSEA. Asp-398 serves as a coordination point for NAD(+). Positions 411–451 are disordered; the sequence is PAARPAHRKGGPVADENAGNSKELKRSRKASSSSSTSATAV. Residues 440 to 451 are compositionally biased toward low complexity; it reads ASSSSSTSATAV. Position 489 (Gly-489) interacts with NAD(+). A spermidine-binding site is contributed by His-494. 514 to 515 is an NAD(+) binding site; sequence NG. Residues 520–522 and 529–535 each bind spermidine; these read GSD and EALSWGK. Lys-535 functions as the Nucleophile in the catalytic mechanism. Residue 548–549 participates in NAD(+) binding; that stretch reads EV. The segment at 568–601 is disordered; it reads RRATDDAQPRRKRSSRGARPPQDVSGHSHLCRGE.

This sequence belongs to the deoxyhypusine synthase family. Homodimer. The cofactor is NAD(+).

It carries out the reaction [eIF5A protein]-L-lysine + spermidine = [eIF5A protein]-deoxyhypusine + propane-1,3-diamine. It participates in protein modification; eIF5A hypusination. Its activity is regulated as follows. N1-guanyl-1,7-diaminoheptane has a small inhibitory effect on activity. Catalyzes the NAD-dependent oxidative cleavage of spermidine and the subsequent transfer of the butylamine moiety of spermidine to the epsilon-amino group of a specific lysine residue of the eIF-5A precursor protein to form the intermediate deoxyhypusine residue. The polypeptide is Deoxyhypusine synthase (Leishmania donovani).